The sequence spans 837 residues: Tuftelin-interacting protein 11 (837 aa).

Composition is skewed to basic and acidic residues over residues 1 to 13 and 53 to 64; these read MSLS…GEGR and VWAERDSDDERP. 3 disordered regions span residues 1–21, 53–72, and 85–133; these read MSLS…DDER, VWAE…KRAR, and LKKG…KGFA. Residues 1 to 50 are required for interaction with DHX15; the sequence is MSLSHLYRDGEGRIDDDDDERENFEITDWDLQNEFNPNRQRHWQTKEEAT. 3 positions are modified to phosphoserine: S2, S59, and S98. A compositionally biased stretch (acidic residues) spans 91-102; sequence EEAELEDSDDEE. Positions 103-116 are enriched in basic and acidic residues; that stretch reads KPVKQDDFPKDFGP. S144 is modified (phosphoserine). The G-patch domain maps to 149–195; sequence TKGIGQKLLQKMGYVPGRGLGKNAQGIINPIEAKQRKGKGAVGAYGS. Positions 179–236 are disordered; sequence IEAKQRKGKGAVGAYGSERTTQSMQDFPVVDSEEEAEEEFQKELSQWRKDPSGSKKKP. The residue at position 210 (S210) is a Phosphoserine. Residues 217–231 show a composition bias toward basic and acidic residues; the sequence is EFQKELSQWRKDPSG. A Nuclear localization signal motif is present at residues 700–705; sequence VKDKFN. Residues 710-734 form a required for nuclear speckle localization region; it reads IMNRAVSSNVGAYMQPGARENIAYL.

It belongs to the TFP11/STIP family. In terms of assembly, identified in the spliceosome C complex. Found in the Intron Large (IL) complex, a post-mRNA release spliceosomal complex containing the excised intron, U2, U5 and U6 snRNPs, and splicing factors. Interacts with TUFT1. Interacts with DHX15; indicative for a recruitment of DHX15 to the IL complex. Interacts with GCFC2.

The protein resides in the cytoplasm. The protein localises to the nucleus. Its function is as follows. Involved in pre-mRNA splicing, specifically in spliceosome disassembly during late-stage splicing events. Intron turnover seems to proceed through reactions in two lariat-intron associated complexes termed Intron Large (IL) and Intron Small (IS). In cooperation with DHX15 seems to mediate the transition of the U2, U5 and U6 snRNP-containing IL complex to the snRNP-free IS complex leading to efficient debranching and turnover of excised introns. May play a role in the differentiation of ameloblasts and odontoblasts or in the forming of the enamel extracellular matrix. The polypeptide is Tuftelin-interacting protein 11 (TFIP11) (Pan troglodytes (Chimpanzee)).